The chain runs to 865 residues: Xylosyltransferase 2 (865 aa).

The Cytoplasmic segment spans residues 1-15 (MVASARVQKLVRRYK). Residues 16–36 (LAIATALAILLLQGLVVWSFS) form a helical; Signal-anchor for type II membrane protein membrane-spanning segment. The Lumenal portion of the chain corresponds to 37-865 (GLEEDEPGEK…GPVKADGRLR (829 aa)). A disordered region spans residues 39–157 (EEDEPGEKGR…EGAPQPTDNG (119 aa)). Basic and acidic residues predominate over residues 53–65 (RPLDPGEGSKDTD). The segment covering 73 to 82 (SAGRRHGRWR) has biased composition (basic residues). Residue Asn122 is glycosylated (N-linked (GlcNAc...) asparagine). The segment covering 125 to 137 (GAAAGEALVGAAG) has biased composition (low complexity). 4 disulfide bridges follow: Cys162–Cys190, Cys206–Cys448, Cys467–Cys480, and Cys469–Cys478. Residues Val239, Asp267, and 296–298 (TIW) contribute to the UDP-alpha-D-xylose site. Asn327 is a glycosylation site (N-linked (GlcNAc...) asparagine). Residue 400-401 (DW) participates in UDP-alpha-D-xylose binding. Residues Ser481 and 504–505 (RK) each bind UDP-alpha-D-xylose. Intrachain disulfides connect Cys581–Cys833 and Cys826–Cys839. Asn683 carries an N-linked (GlcNAc...) asparagine glycan.

It belongs to the glycosyltransferase 14 family. XylT subfamily. As to quaternary structure, monomer. The cofactor is Mg(2+). It depends on Mn(2+) as a cofactor. Contains disulfide bonds.

Its subcellular location is the golgi apparatus membrane. It is found in the secreted. The catalysed reaction is UDP-alpha-D-xylose + L-seryl-[protein] = 3-O-(beta-D-xylosyl)-L-seryl-[protein] + UDP + H(+). Its pathway is glycan metabolism; chondroitin sulfate biosynthesis. The protein operates within glycan metabolism; heparan sulfate biosynthesis. In terms of biological role, catalyzes the first step in the biosynthesis of chondroitin sulfate, heparan sulfate and dermatan sulfate proteoglycans, such as DCN. Transfers D-xylose from UDP-D-xylose to specific serine residues of the core protein. This is Xylosyltransferase 2 (XYLT2) from Canis lupus familiaris (Dog).